Consider the following 689-residue polypeptide: Calcium-responsive transcription factor (689 aa).

Disordered stretches follow at residues 1–46 (MEQR…PTIL) and 541–609 (SPDG…SVPN). The segment covering 13-29 (DGEKSEREAQGFEHRTC) has biased composition (basic and acidic residues). Composition is skewed to polar residues over residues 541 to 559 (SPDG…SSSP) and 578 to 601 (LGQS…SSTG).

As to expression, highly expressed in brain and testis.

It localises to the nucleus. In terms of biological role, acts as a transcriptional activator that mediates the calcium- and neuron-selective induction of BDNF exon III transcription. Binds to the consensus calcium-response element CaRE1 5'-CTATTTCGAG-3' sequence. This is Calcium-responsive transcription factor (Carf) from Mus musculus (Mouse).